The sequence spans 99 residues: Protein NCBP2AS2 (99 aa).

Residues 76-99 (ELRRGLRGRSGPPPGSQRGPGANI) are disordered.

This chain is Protein NCBP2AS2, found in Homo sapiens (Human).